Here is a 454-residue protein sequence, read N- to C-terminus: Histidine--tRNA ligase (454 aa).

Residues 434 to 454 form a disordered region; the sequence is ADAGAWNPPTEDLHPGVIGTW.

Belongs to the class-II aminoacyl-tRNA synthetase family. Homodimer.

It localises to the cytoplasm. The catalysed reaction is tRNA(His) + L-histidine + ATP = L-histidyl-tRNA(His) + AMP + diphosphate + H(+). The chain is Histidine--tRNA ligase (hisS) from Cutibacterium acnes (strain DSM 16379 / KPA171202) (Propionibacterium acnes).